A 223-amino-acid polypeptide reads, in one-letter code: Protein Mis18-alpha (223 aa).

The disordered stretch occupies residues 1-30 (MAGTFSLEPCSTSSSCNHQGKRSESSLLEK). Over residues 9-18 (PCSTSSSCNH) the composition is skewed to polar residues. Basic and acidic residues predominate over residues 21-30 (KRSESSLLEK). Phosphoserine is present on residues Ser33, Ser36, and Ser37. One can recognise a Mis18 domain in the interval 71-169 (PLVFLCTRCR…SVEAVESYTL (99 aa)). 4 residues coordinate Zn(2+): Cys76, Cys79, Cys132, and Cys135. Lys153 is covalently cross-linked (Glycyl lysine isopeptide (Lys-Gly) (interchain with G-Cter in SUMO2)). Position 223 is a phosphoserine (Ser223).

The protein belongs to the mis18 family. Homodimer, and heterodimer with OIP5/MIS18B. Identified in a complex containing MIS18A, OIP5/MIS18B, MIS18BP1, RBBP7 and RBBP4.

It is found in the nucleus. It localises to the chromosome. The protein localises to the centromere. Required for recruitment of CENPA to centromeres and normal chromosome segregation during mitosis. This is Protein Mis18-alpha (Mis18a) from Rattus norvegicus (Rat).